Reading from the N-terminus, the 261-residue chain is CD40 ligand (261 aa).

Topologically, residues 1-22 (MIETYSQPSPRSVATGPPVSMK) are cytoplasmic. The helical; Signal-anchor for type II membrane protein transmembrane segment at 23–46 (IFMYLLTVFLITQMIGSALFAVYL) threads the bilayer. Over 47-261 (HRRLDKIEDE…GFTSFGLLKL (215 aa)) the chain is Extracellular. The region spanning 122–261 (IAAHVISEAS…GFTSFGLLKL (140 aa)) is the THD domain. Cys-178 and Cys-218 form a disulfide bridge. N-linked (GlcNAc...) asparagine glycosylation is present at Asn-240.

The protein belongs to the tumor necrosis factor family. In terms of assembly, homotrimer. Interacts with CD28. CD40 ligand, soluble form: Exists as either a monomer or a homotrimer. Forms a ternary complex between CD40 and integrins for CD40-CD40LG signaling. Post-translationally, the soluble form derives from the membrane form by proteolytic processing.

Its subcellular location is the cell membrane. The protein localises to the cell surface. It localises to the secreted. Functionally, cytokine that acts as a ligand to CD40/TNFRSF5. Costimulates T-cell proliferation and cytokine production. Its cross-linking on T-cells generates a costimulatory signal which enhances the production of IL4 and IL10 in conjunction with the TCR/CD3 ligation and CD28 costimulation. Induces the activation of NF-kappa-B. Induces the activation of kinases MAPK8 and PAK2 in T-cells. Mediates B-cell proliferation in the absence of co-stimulus as well as IgE production in the presence of IL4. Involved in immunoglobulin class switching. In terms of biological role, acts as a ligand for integrins, specifically ITGA5:ITGB1 and ITGAV:ITGB3; both integrins and the CD40 receptor are required for activation of CD40-CD40LG signaling, which have cell-type dependent effects, such as B-cell activation, NF-kappa-B signaling and anti-apoptotic signaling. The sequence is that of CD40 ligand (CD40LG) from Bos taurus (Bovine).